The chain runs to 354 residues: Protein OPG055 (354 aa).

The protein belongs to the orthopoxvirus OPG055 family.

Its function is as follows. Stimulates increases in peripheral microtubule dynamics and may increase the motility of the infected cells, contributing to cell-to-cell spread of the virus. Seems to inhibit the signaling via the GTPase RHOA and DIAPH1/mDia. This Homo sapiens (Human) protein is Protein OPG055 (OPG055).